We begin with the raw amino-acid sequence, 373 residues long: GDSL esterase/lipase LIP-4 (373 aa).

The N-terminal stretch at 1–32 is a signal peptide; it reads MATLFLYSNTFSFFFITLVSLALLILRQPSRA. Ser47 (nucleophile) is an active-site residue. N-linked (GlcNAc...) asparagine glycosylation is present at Asn93. Residues Asp339 and His342 contribute to the active site.

It belongs to the 'GDSL' lipolytic enzyme family.

It is found in the secreted. The chain is GDSL esterase/lipase LIP-4 (LIP4) from Arabidopsis thaliana (Mouse-ear cress).